Reading from the N-terminus, the 175-residue chain is Large ribosomal subunit protein uL6 (175 aa).

This sequence belongs to the universal ribosomal protein uL6 family. Part of the 50S ribosomal subunit.

Functionally, this protein binds to the 23S rRNA, and is important in its secondary structure. It is located near the subunit interface in the base of the L7/L12 stalk, and near the tRNA binding site of the peptidyltransferase center. The protein is Large ribosomal subunit protein uL6 of Xanthomonas campestris pv. campestris (strain 8004).